The following is a 217-amino-acid chain: Probable transaldolase (217 aa).

K83 serves as the catalytic Schiff-base intermediate with substrate.

It belongs to the transaldolase family. Type 3B subfamily.

Its subcellular location is the cytoplasm. The catalysed reaction is D-sedoheptulose 7-phosphate + D-glyceraldehyde 3-phosphate = D-erythrose 4-phosphate + beta-D-fructose 6-phosphate. It functions in the pathway carbohydrate degradation; pentose phosphate pathway; D-glyceraldehyde 3-phosphate and beta-D-fructose 6-phosphate from D-ribose 5-phosphate and D-xylulose 5-phosphate (non-oxidative stage): step 2/3. In terms of biological role, transaldolase is important for the balance of metabolites in the pentose-phosphate pathway. The chain is Probable transaldolase from Roseobacter denitrificans (strain ATCC 33942 / OCh 114) (Erythrobacter sp. (strain OCh 114)).